We begin with the raw amino-acid sequence, 620 residues long: PAN2-PAN3 deadenylation complex subunit PAN3 (620 aa).

The C3H1-type zinc-finger motif lies at 7 to 36; it reads SAKGTLCKNILIYGYCKYENKGCAFSHRRN. Disordered stretches follow at residues 39 to 73 and 95 to 168; these read ANSG…QPST and VFVP…QPGP. Composition is skewed to polar residues over residues 63 to 73 and 101 to 126; these read NVNTPSFQPST and TPAS…TVSN. Residues 226–482 are pseudokinase domain; it reads QSYPGGPEIV…LESYIRKHLA (257 aa). ATP contacts are provided by residues Arg-274, 323–330, and 380–381; these read DYYPNAST and SK. Positions 483–521 form a coiled coil; sequence IRLLDVVDMLEDSNDYLESQLSTELENARLVRLMTKINF. A knob domain region spans residues 522–620; that stretch reads IVDRPEWDNE…SVFRTITRGK (99 aa).

Belongs to the protein kinase superfamily. PAN3 family. Homodimer. Forms a heterotrimer with a catalytic subunit PAN2 to form the poly(A)-nuclease (PAN) deadenylation complex. Interacts (via PAM-2 motif) with poly(A)-binding protein PAB1 (via PABC domain), conferring substrate specificity of the enzyme complex.

The protein resides in the cytoplasm. In terms of biological role, regulatory subunit of the poly(A)-nuclease (PAN) deadenylation complex, one of two cytoplasmic mRNA deadenylases involved in mRNA turnover. PAN specifically shortens poly(A) tails of RNA and the activity is stimulated by poly(A)-binding protein PAB1. PAN deadenylation is followed by rapid degradation of the shortened mRNA tails by the CCR4-NOT complex. Deadenylated mRNAs are then degraded by two alternative mechanisms, namely exosome-mediated 3'-5' exonucleolytic degradation, or deadenylation-dependent mRNA decaping and subsequent 5'-3' exonucleolytic degradation by XRN1. May also be involved in post-transcriptional maturation of mRNA poly(A) tails. PAN3 acts as a positive regulator for PAN activity, recruiting the catalytic subunit PAN2 to mRNA via its interaction with RNA and with PAB1. This is PAN2-PAN3 deadenylation complex subunit PAN3 from Meyerozyma guilliermondii (strain ATCC 6260 / CBS 566 / DSM 6381 / JCM 1539 / NBRC 10279 / NRRL Y-324) (Yeast).